Consider the following 102-residue polypeptide: Integration host factor subunit alpha (102 aa).

The protein belongs to the bacterial histone-like protein family. As to quaternary structure, heterodimer of an alpha and a beta chain.

This protein is one of the two subunits of integration host factor, a specific DNA-binding protein that functions in genetic recombination as well as in transcriptional and translational control. In Buchnera aphidicola subsp. Acyrthosiphon pisum (strain 5A), this protein is Integration host factor subunit alpha.